A 110-amino-acid chain; its full sequence is MPVVIRLARAGTKKRPVYHVVVADSRYPRDGRFIERLGYFNPLMPKDNADRLKIDLDKVKAWLAKGAQPSDRVARFLDAAGVKKRTARNNPEKAVPRKERKAQAEAAAKS.

Residues 84 to 110 (KRTARNNPEKAVPRKERKAQAEAAAKS) form a disordered region. Residues 90-103 (NPEKAVPRKERKAQ) are compositionally biased toward basic and acidic residues.

Belongs to the bacterial ribosomal protein bS16 family.

The sequence is that of Small ribosomal subunit protein bS16 from Nitrobacter hamburgensis (strain DSM 10229 / NCIMB 13809 / X14).